Consider the following 811-residue polypeptide: MSAIARAAARVRQQNTTPLQRPLLLQRKPVLTHTLPLHASPLKPSLATSITSPNFQQSFQRRWASASAKAEEGAKEEVWPQRKLPELTETDKLRLRRQRNVGISAHIDSGKTTLTERVLYYTGRIRDIHEVRGRDAVGAKMDSMELEREKGITIQSAATFADWVAPKPPTELKEGETVGNTDKQKFAINIIDTPGHVDFTIEVERALRVLDGAVLVLCAVSGVQSQTITVDRQMRRYNVPRLAFINKMDRAGSNPFRVIGQLRGKLKMNAAAVQVPIGSESDFAGVVDIVRMKAIYNEGVKGNQIVETDEIPESVRALAEEKRAELIEQLSEADETLCDLFLDEAPITPTDIAQALQRATTSLRFTPVFMGSAIKNTGVQPLLDGVCAYLPNPSEVQNQAMDATLPAHAPTIPLVPATDAPLVGLAFKLEEGRYGQLTYMRVYQGELKRGSMIYNARTGKRVKVPRLVRMHADEMEDVDAVVAGEICAMFGVECSSGDTFTDGSSTYTMTSMFVPEPVISLSIRPEGNETPNFSRALNRFQKEDPTFRVHVDSESQETIISGMGELHLDIYVERMKREYNVACVTGKPRVAFRETITEAAKFNYTHKKQSGGSGQFGRVIGSIEPMETDPDTGKDTAFENRIIGGNIPNQFIPAIQKGFQEALDRGLITGHPITGCKFVLDDGSAHAVDSNELAFRLAAIGAFREAFNKARPVVLEPVMTVEIVAPIEFQGNVIGAINQRKGTIVDTEVRDDEFTLTAEVALNDMFGYSSQLRGMTQGKGEFSMEYKNHQPVLPNIQKEMAEAFRKKQLSK.

A mitochondrion-targeting transit peptide spans 1–64; it reads MSAIARAAAR…FQQSFQRRWA (64 aa). The 299-residue stretch at 96 to 394 folds into the tr-type G domain; it reads RRQRNVGISA…GVCAYLPNPS (299 aa). GTP is bound by residues 105–112, 192–196, and 246–249; these read AHIDSGKT, DTPGH, and NKMD.

The protein belongs to the TRAFAC class translation factor GTPase superfamily. Classic translation factor GTPase family. EF-G/EF-2 subfamily.

Its subcellular location is the mitochondrion. It participates in protein biosynthesis; polypeptide chain elongation. Mitochondrial GTPase that catalyzes the GTP-dependent ribosomal translocation step during translation elongation. During this step, the ribosome changes from the pre-translocational (PRE) to the post-translocational (POST) state as the newly formed A-site-bound peptidyl-tRNA and P-site-bound deacylated tRNA move to the P and E sites, respectively. Catalyzes the coordinated movement of the two tRNA molecules, the mRNA and conformational changes in the ribosome. This chain is Elongation factor G, mitochondrial, found in Cryptococcus neoformans var. neoformans serotype D (strain B-3501A) (Filobasidiella neoformans).